A 530-amino-acid polypeptide reads, in one-letter code: Inactive ubiquitin carboxyl-terminal hydrolase 17-like protein 7 (530 aa).

A USP domain is found at 80–375 (AGLQKIGNTF…QAYVLFYIQK (296 aa)). The segment covering 382–392 (SESVSRGREPR) has biased composition (basic and acidic residues). 3 disordered regions span residues 382-412 (SESVSRGREPRALGAEDTDRPATQGELKRDH), 431-454 (ESTLDHWKFPQEQNKTKPEFNVRK), and 490-530 (SSTK…LVCQ). Polar residues predominate over residues 490 to 512 (SSTKPTDQESMNTGTLASLQGST). The segment covering 513–524 (RRSKGNNKHSKR) has biased composition (basic residues).

The protein belongs to the peptidase C19 family. USP17 subfamily.

The protein resides in the nucleus. Its subcellular location is the endoplasmic reticulum. In Homo sapiens (Human), this protein is Inactive ubiquitin carboxyl-terminal hydrolase 17-like protein 7 (USP17L7).